Here is a 774-residue protein sequence, read N- to C-terminus: 5-methyltetrahydropteroyltriglutamate--homocysteine methyltransferase (774 aa).

5-methyltetrahydropteroyltri-L-glutamate is bound by residues 23-26 (RELK) and Lys-123. Residues 446–448 (IGS) and Glu-499 contribute to the L-homocysteine site. Residues 446–448 (IGS) and Glu-499 each bind L-methionine. Residues 530–531 (RC) and Trp-576 each bind 5-methyltetrahydropteroyltri-L-glutamate. L-homocysteine is bound at residue Asp-614. Asp-614 is a binding site for L-methionine. Residue Glu-620 coordinates 5-methyltetrahydropteroyltri-L-glutamate. His-656, Cys-658, and Glu-680 together coordinate Zn(2+). His-709 acts as the Proton donor in catalysis. Cys-741 serves as a coordination point for Zn(2+).

It belongs to the vitamin-B12 independent methionine synthase family. Zn(2+) is required as a cofactor.

It catalyses the reaction 5-methyltetrahydropteroyltri-L-glutamate + L-homocysteine = tetrahydropteroyltri-L-glutamate + L-methionine. It participates in amino-acid biosynthesis; L-methionine biosynthesis via de novo pathway; L-methionine from L-homocysteine (MetE route): step 1/1. Its function is as follows. Catalyzes the transfer of a methyl group from 5-methyltetrahydrofolate to homocysteine resulting in methionine formation. This Aliivibrio fischeri (strain MJ11) (Vibrio fischeri) protein is 5-methyltetrahydropteroyltriglutamate--homocysteine methyltransferase.